The sequence spans 262 residues: tRNA pseudouridine synthase A (262 aa).

Asp-51 acts as the Nucleophile in catalysis. Substrate is bound at residue Tyr-109.

The protein belongs to the tRNA pseudouridine synthase TruA family. Homodimer.

The catalysed reaction is uridine(38/39/40) in tRNA = pseudouridine(38/39/40) in tRNA. Functionally, formation of pseudouridine at positions 38, 39 and 40 in the anticodon stem and loop of transfer RNAs. The sequence is that of tRNA pseudouridine synthase A from Actinobacillus pleuropneumoniae serotype 7 (strain AP76).